Here is a 302-residue protein sequence, read N- to C-terminus: N-acetylmuramic acid 6-phosphate etherase (302 aa).

In terms of domain architecture, SIS spans 58 to 221 (IGESFLNGGR…STGAMVKTGK (164 aa)). Catalysis depends on E86, which acts as the Proton donor. Residue E117 is part of the active site.

It belongs to the GCKR-like family. MurNAc-6-P etherase subfamily. As to quaternary structure, homodimer.

The catalysed reaction is N-acetyl-D-muramate 6-phosphate + H2O = N-acetyl-D-glucosamine 6-phosphate + (R)-lactate. It participates in amino-sugar metabolism; N-acetylmuramate degradation. Specifically catalyzes the cleavage of the D-lactyl ether substituent of MurNAc 6-phosphate, producing GlcNAc 6-phosphate and D-lactate. The protein is N-acetylmuramic acid 6-phosphate etherase of Clostridium botulinum (strain Langeland / NCTC 10281 / Type F).